The chain runs to 241 residues: 1-(5-phosphoribosyl)-5-[(5-phosphoribosylamino)methylideneamino] imidazole-4-carboxamide isomerase (241 aa).

Asp10 acts as the Proton acceptor in catalysis. Asp131 functions as the Proton donor in the catalytic mechanism.

The protein belongs to the HisA/HisF family.

It is found in the cytoplasm. It catalyses the reaction 1-(5-phospho-beta-D-ribosyl)-5-[(5-phospho-beta-D-ribosylamino)methylideneamino]imidazole-4-carboxamide = 5-[(5-phospho-1-deoxy-D-ribulos-1-ylimino)methylamino]-1-(5-phospho-beta-D-ribosyl)imidazole-4-carboxamide. It participates in amino-acid biosynthesis; L-histidine biosynthesis; L-histidine from 5-phospho-alpha-D-ribose 1-diphosphate: step 4/9. In Bifidobacterium adolescentis (strain ATCC 15703 / DSM 20083 / NCTC 11814 / E194a), this protein is 1-(5-phosphoribosyl)-5-[(5-phosphoribosylamino)methylideneamino] imidazole-4-carboxamide isomerase.